Reading from the N-terminus, the 86-residue chain is Small ribosomal subunit protein bS16 (86 aa).

This sequence belongs to the bacterial ribosomal protein bS16 family.

The polypeptide is Small ribosomal subunit protein bS16 (Hamiltonella defensa subsp. Acyrthosiphon pisum (strain 5AT)).